Here is a 161-residue protein sequence, read N- to C-terminus: Kininogen-2 (161 aa).

Positions 1–23 (MRLWFCLSFFVVLCLEHFPGTLA) are cleaved as a signal peptide. Cys150 and Cys156 form a disulfide bridge. Val160 carries the post-translational modification Valine amide.

This sequence belongs to the bradykinin-related peptide family. In terms of tissue distribution, expressed by the skin glands.

It localises to the secreted. Its function is as follows. Inhibits ACE with a Ki of 1.6 uM, and targets B2 bradykinin receptor (BDKRB2). Provokes contraction of smooth muscle preparation (ileum). In vivo, induces an early hyperalgesic effects in living rats after intraplantar injection. Inhibits the bradykinin-induced in vitro relaxation of rat arterial smooth muscle and constriction of intestinal smooth muscle. May target bradykinin receptors (BDKRB). This is Kininogen-2 from Bombina orientalis (Oriental fire-bellied toad).